Reading from the N-terminus, the 334-residue chain is Mediator of RNA polymerase II transcription subunit 4 (334 aa).

Residues 71 to 100 (QEREQLIRTLEAHVEKRDEVIQQLETNLKS) adopt a coiled-coil conformation. Residues 193 to 334 (PLITSPSASS…ASKKTGSSNK (142 aa)) are disordered. Composition is skewed to polar residues over residues 194-206 (LITS…SNGG) and 251-282 (NEKQ…SSPN).

Belongs to the Mediator complex subunit 4 family. As to quaternary structure, component of the Mediator complex.

The protein resides in the nucleus. Functionally, component of the Mediator complex, a coactivator involved in the regulated transcription of nearly all RNA polymerase II-dependent genes. Mediator functions as a bridge to convey information from gene-specific regulatory proteins to the basal RNA polymerase II transcription machinery. Mediator is recruited to promoters by direct interactions with regulatory proteins and serves as a scaffold for the assembly of a functional preinitiation complex with RNA polymerase II and the general transcription factors. In Caenorhabditis elegans, this protein is Mediator of RNA polymerase II transcription subunit 4 (mdt-4).